Here is a 506-residue protein sequence, read N- to C-terminus: H/ACA ribonucleoprotein complex subunit DKC1 (506 aa).

Residues 1-26 (MADTESKKEKKRKSKKISDEEVGDIQ) are disordered. Residue Asp-120 is the Nucleophile of the active site. A PUA domain is found at 291-366 (HKRIVMKDSA…VVAKIKRVIM (76 aa)). Disordered regions lie at residues 391–410 (GLLD…WKEG) and 419–506 (VKKG…ADSD). Residues 421–434 (KGGEASAKRKRDES) show a composition bias toward basic and acidic residues. Positions 457–466 (EKKKKKKEKK) are enriched in basic residues.

Belongs to the pseudouridine synthase TruB family. In terms of assembly, part of the H/ACA small nucleolar ribonucleoprotein (H/ACA snoRNP) complex. The complex binds a box H/ACA small nucleolar RNA (snoRNA), which may target the specific site of modification within the RNA substrate.

It localises to the nucleus. It is found in the nucleolus. The protein resides in the cajal body. It carries out the reaction uridine in 5S rRNA = pseudouridine in 5S rRNA. Functionally, catalytic subunit of H/ACA small nucleolar ribonucleoprotein (H/ACA snoRNP) complex, which catalyzes pseudouridylation of rRNA. This involves the isomerization of uridine such that the ribose is subsequently attached to C5, instead of the normal N1. Pseudouridine ('psi') residues may serve to stabilize the conformation of rRNAs. Required for ribosome biogenesis and telomere maintenance. The protein is H/ACA ribonucleoprotein complex subunit DKC1 of Danio rerio (Zebrafish).